The chain runs to 1340 residues: Thioester-containing protein 1 allele S1 (1340 aa).

A signal peptide spans 1-21; that stretch reads MWQFIRSRILTVIIFIGAAHG. Asparagine 68, asparagine 199, asparagine 242, asparagine 312, and asparagine 481 each carry an N-linked (GlcNAc...) asparagine glycan. Residues 580 to 609 form a may contain the cleavage site region; sequence ENEFDIFHSLGLFARTLDDILFDSANEKTG. N-linked (GlcNAc...) asparagine glycosylation is found at asparagine 637, asparagine 728, asparagine 813, and asparagine 828. A cross-link (isoglutamyl cysteine thioester (Cys-Gln)) is located at residues 859-862; sequence CGEQ. Cystine bridges form between cysteine 1217-cysteine 1283, cysteine 1326-cysteine 1338, and cysteine 1329-cysteine 1334.

As to quaternary structure, heterodimer of a TEP1-N chain and an TEP1-C chain non-covalently linked. Forms a complex composed of TEP1-N and TEP1-C heterodimer, LRIM1 and APL1C; the interaction stabilizes TEP1-N and TEP1-C heterodimer, prevents its binding to tissues while circulating in the hemolymph and protects the thioester bond from hydrolysis. Mature TEP1 and to a lesser extent full-length TEP1 interact with SPCLIP1; the interaction is induced by microbial infection. Post-translationally, in the hemolymph, the full-length protein is cleaved by an unknow protease into a 75kDa N-terminal (TEP1-N) chain and an 80kDa C-terminal (TEP1-C) chain which remain non-covalently linked. The TEP1-C chain contains the thioester bond which covalently binds to the pathogen surface. Cleavage is induced by bacterial infection or aseptic wound injury. During embryonic and pupal development, the cleaved form is the predominant form. N-glycosylated. Specifically expressed in hemocytes (at protein level).

The protein localises to the secreted. In terms of biological role, plays an essential role in the innate immune response to bacteria and protozoa infection. After proteolytic cleavage, the protein C-terminus binds covalently through a thioester bond to the pathogen surface resulting in pathogen clearance either by melanization or lysis. Initiate the recruitment and activation of a cascade of proteases, mostly of CLIP-domain serine proteases, which leads to the proteolytic cleavage of the prophenoloxidase (PPO) into active phenoloxidase (PO), the rate-limiting enzyme in melanin biosynthesis. In response to parasite P.berghei-mediated infection, binds to and mediates killing of ookinetes, as they egress from midgut epithelial cells into the basal labyrinth, by both lysis and melanization. During bacterial infection, binds to both Gram-positive and Gram-negative bacteria but only promotes phagocytosis of Gram-negative bacteria. Promotes the accumulation of SPCLIP1 onto the surface of P.berghei ookinetes and bacterium E.coli which leads to the melanization of the pathogen. Recruits CLIPA2 to bacteria surface. In response to bacterial infection, required for periostial hemocyte aggregation, but not for the aggregation of sessile hemocytes in non-periostial regions. During the late stage of fungus B.bassiana-mediated infection, required for the initiation of hyphae melanization by binding to the surface of hyphae and recruiting prophenoloxidase PPO to them. Plays a role in male fertility by binding to defective sperm cells and promoting their removal during spermatogenesis. Binds covalently through a thioester bond to the pathogen surface resulting in pathogen clearance. The chain is Thioester-containing protein 1 allele S1 from Anopheles gambiae (African malaria mosquito).